Consider the following 893-residue polypeptide: MPQKEVTIPVPAKGGSNKEEDKKDNKDTEEKNTTTNTTTKDNKKDKKKDKKEETLSPEDEKLKNDLELLVERSRDEKEEIALAALEALKTEIRSSTSSMTSVPKPLKFLRNHYSTLVDIYKNSKEGKAKTSLADILSVLAMANGNDERDTLKYKLLGSGEAIASWGHEYVKHLATEIGVEYDIKKEENQSVEDLLKLVDEIVPFQMTHNAEPEACDLLLEVEQLSKIFQYIDENNYSRVCLYLFKCSYYVPGPDDINILKVCVEIYIKMKQYPDALRVAMKISDPELITEIFKLVENNKSILQQLGFLVARQKIVPDNFNYDSISDIINNSKLSEYFMNLATDLDIREPKLPEEIFQSHLDSTSAIADSARMNLASSFVNAFVNAGFGKDKLMTAEEDTKWWFKNRELGILSTVASTGMVVLWDIDGGLTKIDKFLYSQEKHCSNGALMAIGMLTSGIRSEMDPALSLLAEHINSSNTGTRISAIFGLGLAYAGTQRQDLMSLLSPCLDDDKEKMEFIGIVGLALGLIFIGSCDPELSTLFVQTLIQRGTAASESHARFLHLGLGLLYLGKQDAAELALETLKAIEGKGGEYARLTVEACAYAGTGNVLKVQNMLHFCSDGQENPHHGLAVLSIALIAMGEELGSDMCLRMFDHLLQKGNVHIKRAIPLALGLLSPSNPRIAIMDILSKLSHDNDPEVAQGAILSLGLIGAGTNNARIGGMLRALAVFYGKDVHLFFVRIAQGLLHLGKGTMTINPYHSDRTLMSPVAVGGLLALLHAGLDIKNILSTQSHYLFFSIVCSMYPRMLMTLDEDLKPLPVSVRVGQSVDIVGLAGKPKTITGFQTHTTPVLLGYNERAELATDDYIPLTNILEGIVILKPNPNASVTSPLASKKN.

The disordered stretch occupies residues 1–59 (MPQKEVTIPVPAKGGSNKEEDKKDNKDTEEKNTTTNTTTKDNKKDKKKDKKEETLSPED). Basic and acidic residues-rich tracts occupy residues 16 to 32 (SNKE…EEKN) and 40 to 59 (KDNK…SPED). 7 PC repeats span residues 412–445 (STVA…HCSN), 446–482 (GALM…GTRI), 483–517 (SAIF…KMEF), 522–555 (GLAL…ASES), 562–583 (LGLG…ETLK), 666–700 (AIPL…EVAQ), and 701–735 (GAIL…DVHL).

Belongs to the proteasome subunit S2 family.

Its function is as follows. Acts as a regulatory subunit of the 26 proteasome which is involved in the ATP-dependent degradation of ubiquitinated proteins. The protein is 26S proteasome non-ATPase regulatory subunit 2 (psmD2) of Dictyostelium discoideum (Social amoeba).